Consider the following 607-residue polypeptide: Chaperone protein DnaK (607 aa).

Phosphothreonine; by autocatalysis is present on T174. Positions A579 to G592 are enriched in low complexity. The segment at A579–D607 is disordered.

This sequence belongs to the heat shock protein 70 family.

In terms of biological role, acts as a chaperone. In Fusobacterium nucleatum subsp. nucleatum (strain ATCC 25586 / DSM 15643 / BCRC 10681 / CIP 101130 / JCM 8532 / KCTC 2640 / LMG 13131 / VPI 4355), this protein is Chaperone protein DnaK.